We begin with the raw amino-acid sequence, 743 residues long: Dolichyl-phosphate-mannose--protein mannosyltransferase 5 (743 aa).

Residues 1 to 46 (MNKEHLLKVDPIPDVTIKRGPLRSFLITKPCDNLSSLRTVTSSKEK) lie on the Lumenal side of the membrane. N-linked (GlcNAc...) asparagine glycosylation occurs at Asn33. Residues 47–67 (LLVGCLLIFTAIVRLHNISLP) form a helical membrane-spanning segment. The Cytoplasmic portion of the chain corresponds to 68–129 (NSVVFGENEV…IGTEYTANVP (62 aa)). A helical transmembrane segment spans residues 130-150 (YVAMRFFSATLGIVSVLVLYL). Residues 151–158 (TLRVSGVK) are Lumenal-facing. The helical transmembrane segment at 159–179 (IAVAAICAVCFAIENSFVTLS) threads the bilayer. A topological domain (cytoplasmic) is located at residue Arg180. The chain crosses the membrane as a helical span at residues 181–201 (FTLIEGPFVFFMACAVYFFRR). The Lumenal segment spans residues 202–231 (SELYLPNSCKANKSLLAASIALGFAVSSKW). An N-linked (GlcNAc...) asparagine glycan is attached at Asn213. A helical membrane pass occupies residues 232–252 (AGLFTIAWAGIIVLWRVWFMI). At 253-264 (GDLSRPIGSSIK) the chain is on the cytoplasmic side. The chain crosses the membrane as a helical span at residues 265-285 (YMAFQFTCLLAIPAFIYFLIF). Topologically, residues 286-583 (SVHIKTLNVN…GREVYFLGNA (298 aa)) are lumenal. In terms of domain architecture, MIR 1 spans 320 to 374 (VAEVAVGSAVSLNHVGTAGGYLHSHLHNYPAGSMQQQVTLYPHIDQNNKWIIELA). N-linked (GlcNAc...) asparagine glycosylation is found at Asn380 and Asn386. 2 MIR domains span residues 384-444 (FQNL…IEID) and 454-510 (QEHI…IEEN). A helical membrane pass occupies residues 584-604 (VLWWSVTAFICTFIIGVAVEL). Residues 605 to 623 (LAWKLGVNILRDKHIINFH) lie on the Cytoplasmic side of the membrane. A helical transmembrane segment spans residues 624–644 (YQVFQYLLGFAAHYFPYFFVG). The Lumenal segment spans residues 645–646 (QK). A helical transmembrane segment spans residues 647–667 (LFLYDYLPAYYFGILAFGHAL). At 668 to 683 (DLISTYISNKRNNTGY) the chain is on the cytoplasmic side. The chain crosses the membrane as a helical span at residues 684–704 (IVVAIFMVVCFYFFSEHSPLI). Residues 705–743 (YATGWSSNLCKRSKWLGSWDFYCNSLLLSDSHYELNAES) lie on the Lumenal side of the membrane.

This sequence belongs to the glycosyltransferase 39 family. As to quaternary structure, PMT3 and PMT5 form a functional heterodimer. Also forms a minor complex with PMT2.

Its subcellular location is the endoplasmic reticulum membrane. It catalyses the reaction a di-trans,poly-cis-dolichyl beta-D-mannosyl phosphate + L-seryl-[protein] = 3-O-(alpha-D-mannosyl)-L-seryl-[protein] + a di-trans,poly-cis-dolichyl phosphate + H(+). The enzyme catalyses a di-trans,poly-cis-dolichyl beta-D-mannosyl phosphate + L-threonyl-[protein] = 3-O-(alpha-D-mannosyl)-L-threonyl-[protein] + a di-trans,poly-cis-dolichyl phosphate + H(+). Its pathway is protein modification; protein glycosylation. Protein O-mannosyltransferase involved in O-glycosylation which is essential for cell wall rigidity. Forms a heterodimeric complex with PMT3 and more rarely with PMT2 to transfer mannose from Dol-P-mannose to Ser or Thr residues on proteins. The protein is Dolichyl-phosphate-mannose--protein mannosyltransferase 5 of Saccharomyces cerevisiae (strain ATCC 204508 / S288c) (Baker's yeast).